Consider the following 313-residue polypeptide: Hydroxyacylglutathione hydrolase, mitochondrial (313 aa).

Zn(2+) is bound by residues His-107, His-109, Asp-111, His-112, His-163, and Asp-187. Substrate contacts are provided by residues 196 to 198 (KFF) and 226 to 228 (HEY). Position 226 (His-226) interacts with Zn(2+). Basic and acidic residues-rich tracts occupy residues 285–294 (VQEHAGERDP) and 301–313 (IRKE…VPKD). The interval 285 to 313 (VQEHAGERDPISTMGAIRKEKDHFKVPKD) is disordered. 302 to 305 (RKEK) is a substrate binding site.

It belongs to the metallo-beta-lactamase superfamily. Glyoxalase II family. Monomer. Zn(2+) serves as cofactor.

The protein resides in the mitochondrion matrix. Its subcellular location is the cytoplasm. It carries out the reaction an S-(2-hydroxyacyl)glutathione + H2O = a 2-hydroxy carboxylate + glutathione + H(+). It catalyses the reaction (R)-S-lactoylglutathione + H2O = (R)-lactate + glutathione + H(+). In terms of biological role, thiolesterase that catalyzes the hydrolysis of S-D-lactoyl-glutathione to form glutathione and D-lactic acid. The protein is Hydroxyacylglutathione hydrolase, mitochondrial (hagh) of Xenopus tropicalis (Western clawed frog).